Reading from the N-terminus, the 387-residue chain is Beta-alanyl-dopamine/carcinine hydrolase (387 aa).

This sequence belongs to the peptidase C45 family. In terms of assembly, the unprocessed protein forms homodimers. May form heterodimers composed of a 15 kDa alpha subunit and a 30 kDa beta subunit. Post-translationally, the protein is synthesized as a 43 kDa precursor which is then self-processed into a 15 kDa alpha subunit and a 30 kDa beta subunit. Processing appears to be necessary for beta-alanyl-dopamine/carcinine hydrolase activity. The beta subunit carries the beta-alanyl-dopamine/carcinine hydrolase activity. Expressed in body, head, optic lobes and retina (at protein level). Expressed in photoreceptor cells R1-R6 in the lamina and in photoreceptor cells R7 and R8 in the medulla (at protein level).

It is found in the cell projection. It localises to the axon. The protein localises to the cytoplasm. It carries out the reaction carcinine + H2O = histamine + beta-alanine. The catalysed reaction is beta-alanyl-dopamine + H2O = dopamine + beta-alanine. Its function is as follows. In the cuticle, catalyzes the hydrolysis of beta-alanyl-dopamine releasing dopamine and beta-alanine; dopamine is a metabolite involved in the pigmentation and sclerotization of the insect cuticle. In the photoreceptor cells, catalyzes the hydrolysis of carcinine releasing histamine and beta-alanine contributing to the recycling of the neurotransmitter histamine in the optical nerve system. Also, regulates the cuticular hydrocarbon composition in females. This is Beta-alanyl-dopamine/carcinine hydrolase from Drosophila melanogaster (Fruit fly).